A 665-amino-acid polypeptide reads, in one-letter code: Intraflagellar transport protein 70B (665 aa).

7 TPR repeats span residues 11–44 (DGEF…SPRS), 45–78 (RAGL…HPEL), 154–187 (TDGQ…SGYQ), 189–221 (DLSY…GIRQ), 393–424 (LTIQ…EKYI), 425–457 (PVLM…CNDH), and 459–492 (VWKL…HYDN). Residues 130–154 (PGSRSLVEQLPSREGGEESGGENET) form a disordered region. Residues 508–535 (YIMTSQNEEAEELMRKIEKEEEQLSYDD) are a coiled coil. The TPR 8 repeat unit spans residues 544–577 (CIVNLVIGTLYCAKGNYDFGISRVIKSLEPYNKK).

The protein belongs to the TTC30/dfy-1/fleer family. As to quaternary structure, interacts with the IFT B complex components IFT27, IFT46, IFT74, IFT52, IFT57, IFT80, IFT81 and IFT88. Interacts with KIF17.

The protein localises to the cell projection. Its subcellular location is the cilium. Its function is as follows. Required for polyglutamylation of axonemal tubulin. Plays a role in anterograde intraflagellar transport (IFT), the process by which cilia precursors are transported from the base of the cilium to the site of their incorporation at the tip. The sequence is that of Intraflagellar transport protein 70B from Homo sapiens (Human).